The sequence spans 314 residues: Nerylneryl diphosphate synthase CPT2, chloroplastic (314 aa).

The N-terminal 61 residues, 1–61, are a transit peptide targeting the chloroplast; the sequence is MNSSIVSQHF…MSDRGLSKIS (61 aa). Asp97 is an active-site residue.

Belongs to the UPP synthase family. Mg(2+) is required as a cofactor. In terms of tissue distribution, expressed in stems. Expressed in petiolules. Expressed at low levels in leaf trichomes, old leaf and roots.

The protein resides in the plastid. Its subcellular location is the chloroplast. It catalyses the reaction 3 isopentenyl diphosphate + dimethylallyl diphosphate = nerylneryl diphosphate + 3 diphosphate. It carries out the reaction isopentenyl diphosphate + dimethylallyl diphosphate = neryl diphosphate + diphosphate. The enzyme catalyses neryl diphosphate + isopentenyl diphosphate = (2Z,6Z)-farnesyl diphosphate + diphosphate. The catalysed reaction is (2Z,6Z)-farnesyl diphosphate + isopentenyl diphosphate = nerylneryl diphosphate + diphosphate. Functionally, uses dimethylallyl diphosphate and isopentenyl diphosphate to catalyze the cis-prenyl chain elongation and produce the 20 carbon product nerylneryl diphosphate. In Solanum lycopersicum (Tomato), this protein is Nerylneryl diphosphate synthase CPT2, chloroplastic.